A 217-amino-acid polypeptide reads, in one-letter code: Ribonuclease HII (217 aa).

An RNase H type-2 domain is found at 26–215 (EIVCGVDEAG…VREALDLMAG (190 aa)). A divalent metal cation is bound by residues aspartate 32, glutamate 33, and aspartate 124.

The protein belongs to the RNase HII family. Requires Mn(2+) as cofactor. It depends on Mg(2+) as a cofactor.

The protein localises to the cytoplasm. The enzyme catalyses Endonucleolytic cleavage to 5'-phosphomonoester.. In terms of biological role, endonuclease that specifically degrades the RNA of RNA-DNA hybrids. This Burkholderia ambifaria (strain ATCC BAA-244 / DSM 16087 / CCUG 44356 / LMG 19182 / AMMD) (Burkholderia cepacia (strain AMMD)) protein is Ribonuclease HII.